The sequence spans 48 residues: Large ribosomal subunit protein bL36c (48 aa).

Belongs to the bacterial ribosomal protein bL36 family.

It localises to the plastid. The protein resides in the chloroplast. This Guillardia theta (Cryptophyte) protein is Large ribosomal subunit protein bL36c (rpl36).